The chain runs to 640 residues: Threonine--tRNA ligase (640 aa).

In terms of domain architecture, TGS spans 1-61 (MPIITLPNGD…TEDSTLQIIT (61 aa)). Positions 242–533 (DHRKIGKALD…LIEHYAGFMP (292 aa)) are catalytic. Positions 333, 384, and 510 each coordinate Zn(2+).

Belongs to the class-II aminoacyl-tRNA synthetase family. In terms of assembly, homodimer. Requires Zn(2+) as cofactor.

The protein resides in the cytoplasm. The catalysed reaction is tRNA(Thr) + L-threonine + ATP = L-threonyl-tRNA(Thr) + AMP + diphosphate + H(+). Its function is as follows. Catalyzes the attachment of threonine to tRNA(Thr) in a two-step reaction: L-threonine is first activated by ATP to form Thr-AMP and then transferred to the acceptor end of tRNA(Thr). Also edits incorrectly charged L-seryl-tRNA(Thr). The sequence is that of Threonine--tRNA ligase from Acinetobacter baumannii (strain AB0057).